The chain runs to 259 residues: 12alpha-hydroxysteroid dehydrogenase (259 aa).

The active-site Proton acceptor is the tyrosine 162.

This sequence belongs to the short-chain dehydrogenases/reductases (SDR) family. As to quaternary structure, homotetramer.

It carries out the reaction cholate + NADP(+) = 3alpha,7alpha-dihydroxy-12-oxo-5beta-cholanate + NADPH + H(+). It catalyses the reaction deoxycholate + NADP(+) = 12-dehydrodeoxycholate + NADPH + H(+). Functionally, catalyzes the oxidation of the 12alpha-hydroxy group of bile acids, like cholate and deoxycholate. Is also able to catalyze the reverse reaction in vitro. Is likely involved in an epimerization pathway of bile acids that converts hydroxy groups from alpha to beta positions via stable oxo-intermediates, which occurs in the human gut. In Clostridium sp. (strain ATCC 29733 / VPI C48-50), this protein is 12alpha-hydroxysteroid dehydrogenase.